We begin with the raw amino-acid sequence, 403 residues long: MSSYLFTSESVSEGHPDKIADQISDAVLDAILAQDKRARVACETMVKTGVAIVAGEVTTSAWIDLEALTRKVILDIGYNSSDVGFDGETCGVLNLIGKQSPDINQGVDRKNPEQQGAGDQGLMFGYATNETDSYMPAAIHLSHRLVEQQAKIRKKKNSALSWLRPDAKSQVTLRYEDGVATAIDAVVLSTQHDPGVKQKDLIEAVREEILKPVLPAKWLHKGTKFHINPTGKFVIGGPVGDCGLTGRKIIVDTYGGWARHGGGAFSGKDPSKVDRSAAYAARYVAKNVVAAGLADRCEVQVSYAIGVAEPTSISVTTFGTGKIADELIEKLIRKHFDLRPFGIIQMLDLIHPMYQQTASYGHFGRKPKDFTYTDGTGAQHSATSFSWEKTDRAEALRAAAKLK.

Histidine 15 is a binding site for ATP. Aspartate 17 contributes to the Mg(2+) binding site. Glutamate 43 serves as a coordination point for K(+). The L-methionine site is built by glutamate 56 and glutamine 99. The tract at residues 99 to 109 (QSPDINQGVDR) is flexible loop. Residues 166 to 168 (DAK), 232 to 233 (KF), aspartate 241, 247 to 248 (RK), alanine 264, and lysine 268 contribute to the ATP site. Residue aspartate 241 participates in L-methionine binding. An L-methionine-binding site is contributed by lysine 272.

The protein belongs to the AdoMet synthase family. As to quaternary structure, homotetramer; dimer of dimers. The cofactor is Mg(2+). It depends on K(+) as a cofactor.

It localises to the cytoplasm. The enzyme catalyses L-methionine + ATP + H2O = S-adenosyl-L-methionine + phosphate + diphosphate. The protein operates within amino-acid biosynthesis; S-adenosyl-L-methionine biosynthesis; S-adenosyl-L-methionine from L-methionine: step 1/1. In terms of biological role, catalyzes the formation of S-adenosylmethionine (AdoMet) from methionine and ATP. The overall synthetic reaction is composed of two sequential steps, AdoMet formation and the subsequent tripolyphosphate hydrolysis which occurs prior to release of AdoMet from the enzyme. The sequence is that of S-adenosylmethionine synthase from Xanthomonas campestris pv. campestris (strain 8004).